The sequence spans 330 residues: Aspartate--ammonia ligase (330 aa).

Belongs to the class-II aminoacyl-tRNA synthetase family. AsnA subfamily.

Its subcellular location is the cytoplasm. It catalyses the reaction L-aspartate + NH4(+) + ATP = L-asparagine + AMP + diphosphate + H(+). Its pathway is amino-acid biosynthesis; L-asparagine biosynthesis; L-asparagine from L-aspartate (ammonia route): step 1/1. The sequence is that of Aspartate--ammonia ligase from Serratia proteamaculans (strain 568).